Consider the following 206-residue polypeptide: Charged multivesicular body protein 6 (206 aa).

A lipid anchor (N-myristoyl glycine) is attached at Gly-2. Residues 11 to 103 (TRVTEQDRAV…AQIEMKVIEG (93 aa)) are a coiled coil. Residues 167–206 (EADLELPEVPGEELPEVPEQEPVREKERVKKKPEREMVAV) form a disordered region. A compositionally biased stretch (acidic residues) spans 168–185 (ADLELPEVPGEELPEVPE). Residues 170-181 (LELPEVPGEELP) carry the Type-2 MIT-interacting motif motif. The segment covering 187–206 (EPVREKERVKKKPEREMVAV) has biased composition (basic and acidic residues).

The protein belongs to the SNF7 family. Probable core component of the endosomal sorting required for transport complex III (ESCRT-III). ESCRT-III components are thought to multimerize to form a flat lattice on the perimeter membrane of the endosome.

It localises to the endomembrane system. The protein localises to the late endosome membrane. Its function is as follows. Probable core component of the endosomal sorting required for transport complex III (ESCRT-III) which is involved in multivesicular bodies (MVBs) formation and sorting of endosomal cargo proteins into MVBs. MVBs contain intraluminal vesicles (ILVs) that are generated by invagination and scission from the limiting membrane of the endosome and mostly are delivered to lysosomes enabling degradation of membrane proteins, such as stimulated growth factor receptors, lysosomal enzymes and lipids. In the ESCRT-III complex, it probably serves as an acceptor for the ESCRT-II complex on endosomal membranes. The sequence is that of Charged multivesicular body protein 6 (chmp6) from Danio rerio (Zebrafish).